The sequence spans 132 residues: Small ribosomal subunit protein uS8 (132 aa).

The protein belongs to the universal ribosomal protein uS8 family. Part of the 30S ribosomal subunit. Contacts proteins S5 and S12.

One of the primary rRNA binding proteins, it binds directly to 16S rRNA central domain where it helps coordinate assembly of the platform of the 30S subunit. The polypeptide is Small ribosomal subunit protein uS8 (Leifsonia xyli subsp. xyli (strain CTCB07)).